We begin with the raw amino-acid sequence, 619 residues long: Large T antigen (619 aa).

The J domain maps to 10-73; that stretch reads ELRGLLGTPD…ATTSQVPEYG (64 aa). An LXCXE motif motif is present at residues 93-97; it reads LHCDE. Over residues 98-108 the composition is skewed to acidic residues; that stretch reads ELEPSDNEEEN. The interval 98 to 131 is disordered; sequence ELEPSDNEEENPAGSQAPGSQATPPKKPRTSPDF. A Phosphoserine; by host modification is found at Ser102. The span at 110-120 shows a compositional bias: polar residues; that stretch reads AGSQAPGSQAT. The residue at position 120 (Thr120) is a Phosphothreonine; by host. The Nuclear localization signal signature appears at 121–128; that stretch reads PPKKPRTS. Residues 132–245 constitute a DNA-binding region (T-ag OBD); that stretch reads PEVLKEYVSN…SQNIQGGLPS (114 aa). The T-ag D1-type zinc finger occupies 255–348; the sequence is EKSVNWKLIS…RRLDMKTLTR (94 aa). 4 residues coordinate Zn(2+): Cys292, Cys295, His303, and His307. The SF3 helicase domain occupies 391–586; the sequence is NMPDVIFNYI…DDFTEKLQEC (196 aa). ATP is bound at residue 417 to 424; the sequence is GPVNCGKT.

Forms homohexamers in the presence of ATP. Interacts with host HDAC1. Interacts (via LXCXE domain) with host RB1; the interaction induces the aberrant dissociation of RB1-E2F1 complex thereby disrupting RB1's activity. Interacts (via LXCXE domain) with host pRB-related proteins RBL1 and RBL2. Interacts (via C-terminus) with host TOP1 and POLA1 allowing DNA replication. Interacts with host TP53, inhibiting TP53 binding to DNA. Interacts with host preinitiation complex components TBP, TFIIA and TFIID to regulate transcription initiation. The cofactor is Mg(2+). Post-translationally, phosphorylated on both serine and threonine residues. Small t antigen inhibits the dephosphorylation by the AC form of PP2A. In terms of processing, O-Glycosylated near the C-terminal region. Acetylated by CBP in a TP53-dependent manner.

The protein resides in the host nucleus. The enzyme catalyses Couples ATP hydrolysis with the unwinding of duplex DNA by translocating in the 3'-5' direction.. It catalyses the reaction ATP + H2O = ADP + phosphate + H(+). Its function is as follows. Isoform large T antigen is a key early protein essential for both driving viral replication and inducing cellular transformation. Plays a role in viral genome replication by driving entry of quiescent cells into the cell cycle and by autoregulating the synthesis of viral early mRNA. Displays highly oncogenic activities by corrupting the host cellular checkpoint mechanisms that guard cell division and the transcription, replication, and repair of DNA. Participates in the modulation of cellular gene expression preceeding viral DNA replication. This step involves binding to host key cell cycle regulators retinoblastoma protein RB1/pRb and TP53. Induces the disassembly of host E2F1 transcription factors from RB1, thus promoting transcriptional activation of E2F1-regulated S-phase genes. Inhibits host TP53 binding to DNA, abrogating the ability of TP53 to stimulate gene expression. Plays the role of a TFIID-associated factor (TAF) in transcription initiation for all three RNA polymerases, by stabilizing the TBP-TFIIA complex on promoters. Initiates viral DNA replication and unwinding via interactions with the viral origin of replication. Binds two adjacent sites in the SV40 origin. The replication fork movement is facilitated by Large T antigen helicase activity. Has processive 3'-5' DNA helicase activity which requires a short 3' single-stranded region and ATP. Activates the transcription of viral late mRNA, through host TBP and TFIIA stabilization. Interferes with histone deacetylation mediated by HDAC1, leading to activation of transcription. In Bovine polyomavirus (BPyV), this protein is Large T antigen.